The chain runs to 232 residues: uncharacterized protein (232 aa).

Helical transmembrane passes span 17–37 (FLAK…VFAY), 54–74 (MSFM…SGAL), 84–104 (ALFL…FMIY), 107–127 (GSIV…SVYG), 138–158 (GSYL…NMFF), 161–181 (SGLN…LTAY), and 203–223 (MAVV…LYLL).

This sequence belongs to the BI1 family.

The protein localises to the cell membrane. This is an uncharacterized protein from Borreliella burgdorferi (strain ATCC 35210 / DSM 4680 / CIP 102532 / B31) (Borrelia burgdorferi).